Here is a 164-residue protein sequence, read N- to C-terminus: UPF0304 protein ESA_00925 (164 aa).

This sequence belongs to the UPF0304 family.

This Cronobacter sakazakii (strain ATCC BAA-894) (Enterobacter sakazakii) protein is UPF0304 protein ESA_00925.